The sequence spans 286 residues: NAD(P)H azoreductase (286 aa).

Residues 6-11, arginine 31, and 136-141 each bind NADP(+); these read GGTGTI and GFFMQN.

It belongs to the NmrA-type oxidoreductase family. Azoreductase type 3 subfamily. Monomer.

Functionally, catalyzes the reductive cleavage of azo bond in aromatic azo compounds to the corresponding amines. Uses preferentially NADPH rather than NADH as an electron donor for its activity. The enzyme reductively cleaved Orange II and carboxy-Orange II, and can also reduce several sulfonated structural analogs, which carry a hydroxy group in the 2 position of the naphthol ring. This chain is NAD(P)H azoreductase (azoB), found in Xenophilus azovorans.